The chain runs to 211 residues: MSVRTKICGISTPETLLAAVKNGASHIGFVFFEKSPRAVQPEMASMLINRIPDHIDKIGVLVDPDDNLLERVVHAGLTGFQLHGHETPERVAFIRRTFPKVKIWKALPITRSQDLDQTLHYRGLVDRVLYDARTDGALPGGMGKRFDWRLLKDYNHPMAWALSGGLDADNIAQAVAITGAELVDVSSGVETAPGIKDMDKIAQFLQAVRLL.

Belongs to the TrpF family.

The enzyme catalyses N-(5-phospho-beta-D-ribosyl)anthranilate = 1-(2-carboxyphenylamino)-1-deoxy-D-ribulose 5-phosphate. The protein operates within amino-acid biosynthesis; L-tryptophan biosynthesis; L-tryptophan from chorismate: step 3/5. The sequence is that of N-(5'-phosphoribosyl)anthranilate isomerase from Zymomonas mobilis subsp. pomaceae (strain ATCC 29192 / DSM 22645 / JCM 10191 / CCUG 17912 / NBRC 13757 / NCIMB 11200 / NRRL B-4491 / Barker I).